We begin with the raw amino-acid sequence, 445 residues long: Argininosuccinate synthase (445 aa).

Residues 17-25 and A43 contribute to the ATP site; that span reads AFSGGLDTS. Residue Y99 coordinates L-citrulline. Residues G129 and T131 each contribute to the ATP site. L-aspartate contacts are provided by T131, N135, and D136. N135 lines the L-citrulline pocket. D136 serves as a coordination point for ATP. L-citrulline contacts are provided by R139 and S192. D194 provides a ligand contact to ATP. The L-citrulline site is built by T201, E203, and E280.

This sequence belongs to the argininosuccinate synthase family. Type 2 subfamily. As to quaternary structure, homotetramer.

It localises to the cytoplasm. The enzyme catalyses L-citrulline + L-aspartate + ATP = 2-(N(omega)-L-arginino)succinate + AMP + diphosphate + H(+). It participates in amino-acid biosynthesis; L-arginine biosynthesis; L-arginine from L-ornithine and carbamoyl phosphate: step 2/3. This is Argininosuccinate synthase from Rhodopseudomonas palustris (strain BisB5).